The sequence spans 162 residues: CASP-like protein 1C1 (162 aa).

Topologically, residues 1-7 (MFSAKAR) are cytoplasmic. A helical transmembrane segment spans residues 8–28 (WIVAVVLRVAAAGAAAVAAVL). The Extracellular segment spans residues 29 to 52 (MAMSHDEVIVYGMEVQAKFRYTPS). Residues 53-73 (LVFFVAANAAVSACSLVVLLV) form a helical membrane-spanning segment. Residues 74–83 (PSSTSKLAAR) are Cytoplasmic-facing. Residues 84 to 104 (LLLMADVVLGMVLAGAFAAAG) form a helical membrane-spanning segment. The Extracellular portion of the chain corresponds to 105-135 (AMAELGKNGNSHAGWIAICVQVPLFCDRVRS). A helical membrane pass occupies residues 136 to 156 (ALVAGSATIVLYYLMLMYSIY). Topologically, residues 157–162 (TLPMFP) are cytoplasmic.

Belongs to the Casparian strip membrane proteins (CASP) family. In terms of assembly, homodimer and heterodimers.

The protein localises to the cell membrane. The polypeptide is CASP-like protein 1C1 (Oryza sativa subsp. japonica (Rice)).